A 333-amino-acid chain; its full sequence is Acetoin:2,6-dichlorophenolindophenol oxidoreductase subunit alpha (333 aa).

Tetramer of 2 alpha and 2 beta subunits. Thiamine diphosphate is required as a cofactor.

It functions in the pathway ketone degradation; acetoin degradation. Catalyzes the 2,6-dichlorophenolindophenol-dependent cleavage of acetoin into acetate and acetaldehyde, in vitro. The alpha subunit is probably the catalytic subunit of the enzyme. The sequence is that of Acetoin:2,6-dichlorophenolindophenol oxidoreductase subunit alpha (acoA) from Cupriavidus necator (strain ATCC 17699 / DSM 428 / KCTC 22496 / NCIMB 10442 / H16 / Stanier 337) (Ralstonia eutropha).